A 463-amino-acid chain; its full sequence is Toxin CaTX-A (463 aa).

The signal sequence occupies residues 1-18 (MSRGYSLHLVLFLVLSTA).

It belongs to the jellyfish toxin family. Type II subfamily. As to quaternary structure, oligomer. Contains disulfide bonds. As to expression, it is suggested that CaTX-B is synthesized in the tentacle, is modified (become CaTX-A) and then migrates to the nematocyst.

It localises to the secreted. The protein resides in the nematocyst. Its subcellular location is the target cell membrane. Functionally, has potent hemolytic activity. Is lethal to crayfish. Causes cutaneous inflammation in humans. May act as a pore-forming toxin, disrupting normal transmembrane ion concentration gradients in susceptible cells. In Carybdea alata (Hawaiian box jellyfish), this protein is Toxin CaTX-A.